Here is a 591-residue protein sequence, read N- to C-terminus: Formate--tetrahydrofolate ligase (591 aa).

Residue 74-81 (TPLGEGKS) participates in ATP binding.

It belongs to the formate--tetrahydrofolate ligase family.

The enzyme catalyses (6S)-5,6,7,8-tetrahydrofolate + formate + ATP = (6R)-10-formyltetrahydrofolate + ADP + phosphate. It functions in the pathway one-carbon metabolism; tetrahydrofolate interconversion. This chain is Formate--tetrahydrofolate ligase, found in Desulforapulum autotrophicum (strain ATCC 43914 / DSM 3382 / VKM B-1955 / HRM2) (Desulfobacterium autotrophicum).